The following is a 196-amino-acid chain: Riboflavin transporter RibU (196 aa).

A run of 5 helical transmembrane segments spans residues 14 to 34, 46 to 66, 80 to 100, 120 to 140, and 164 to 184; these read LIAI…VPII, IVPV…WVIL, VNTY…ITVL, LISS…FVAI, and MVLP…MIIL.

Belongs to the prokaryotic riboflavin transporter (P-RFT) (TC 2.A.87) family. As to quaternary structure, in E.coli forms a stable energy-coupling factor (ECF) transporter complex probably composed of a membrane-embedded substrate-binding protein (S component), 2 ATP-binding proteins (A components) and 2 transmembrane proteins (T component). May be able to interact with more than 1 S component at a time.

The protein resides in the cell membrane. Its function is as follows. Probable riboflavin-binding protein that interacts with the energy-coupling factor (ECF) ABC-transporter complex. Unlike classic ABC transporters this ECF transporter provides the energy necessary to transport a number of different substrates. The substrates themselves are bound by transmembrane, not extracytoplasmic soluble proteins and transport it into cells. The chain is Riboflavin transporter RibU (ribU) from Leuconostoc mesenteroides subsp. mesenteroides (strain ATCC 8293 / DSM 20343 / BCRC 11652 / CCM 1803 / JCM 6124 / NCDO 523 / NBRC 100496 / NCIMB 8023 / NCTC 12954 / NRRL B-1118 / 37Y).